The following is a 304-amino-acid chain: UDP-N-acetylenolpyruvoylglucosamine reductase (304 aa).

The FAD-binding PCMH-type domain occupies 33–213 (IGGPADIMVI…LEITRDLTER (181 aa)). The active site involves arginine 177. Serine 227 acts as the Proton donor in catalysis. Glutamate 297 is a catalytic residue.

The protein belongs to the MurB family. FAD serves as cofactor.

It localises to the cytoplasm. The catalysed reaction is UDP-N-acetyl-alpha-D-muramate + NADP(+) = UDP-N-acetyl-3-O-(1-carboxyvinyl)-alpha-D-glucosamine + NADPH + H(+). Its pathway is cell wall biogenesis; peptidoglycan biosynthesis. Functionally, cell wall formation. The sequence is that of UDP-N-acetylenolpyruvoylglucosamine reductase from Alkaliphilus oremlandii (strain OhILAs) (Clostridium oremlandii (strain OhILAs)).